The following is a 266-amino-acid chain: Phosphate import ATP-binding protein PstB 1 (266 aa).

Residues 18-261 (AQTSNLSFYY…PTNQLTEQYV (244 aa)) form the ABC transporter domain. 50 to 57 (GPSGCGKT) lines the ATP pocket.

Belongs to the ABC transporter superfamily. Phosphate importer (TC 3.A.1.7) family. As to quaternary structure, the complex is composed of two ATP-binding proteins (PstB), two transmembrane proteins (PstC and PstA) and a solute-binding protein (PstS).

Its subcellular location is the cell inner membrane. It catalyses the reaction phosphate(out) + ATP + H2O = ADP + 2 phosphate(in) + H(+). Its function is as follows. Part of the ABC transporter complex PstSACB involved in phosphate import. Responsible for energy coupling to the transport system. This chain is Phosphate import ATP-binding protein PstB 1, found in Gloeobacter violaceus (strain ATCC 29082 / PCC 7421).